A 188-amino-acid polypeptide reads, in one-letter code: MYTRYKLSILFFVINFYNILCMPLSCETECCMAGKKYDDAAIDRDLCVLLCNLQYLASSNEGIGEILQCCLSSNYTSKTREDLRNCIAKCPPLPDRGCTGECCDLRENVDSLRANNPLGCCNDYTKVSSSSLNEDDVIDCRKSDASCEDRGYLLVRNNGSAVCIPENSKNDNIGFYFGSECSDLSRKG.

It belongs to the intercrine beta (chemokine CC) family. Highly divergent.

In Fowlpox virus (strain NVSL) (FPV), this protein is Putative CC-type chemokine FPV060.